The chain runs to 439 residues: ATP-dependent RNA helicase SrmB (439 aa).

The Q motif motif lies at 4-32 (SQFEQFDLSPELLKALEKKGYSRPTAIQM). Residues 35 to 209 (IPAAMEESDV…AERLLNDPVK (175 aa)) enclose the Helicase ATP-binding domain. Position 48–55 (48–55 (APTGTGKT)) interacts with ATP. The DEAD box signature appears at 157-160 (DEAD). A Helicase C-terminal domain is found at 237–387 (KLLARFIETE…GLEPRTKPPK (151 aa)). Basic and acidic residues predominate over residues 381–393 (PRTKPPKDGEVKS). The tract at residues 381 to 439 (PRTKPPKDGEVKSVSKKQKARIKEKREEKKKTEAKKKVKLRHKDTKNIGKRRKPSNSNV) is disordered. 2 stretches are compositionally biased toward basic residues: residues 394–403 (VSKKQKARIK) and 412–439 (TEAKKKVKLRHKDTKNIGKRRKPSNSNV).

This sequence belongs to the DEAD box helicase family. SrmB subfamily. As to quaternary structure, interacts with the 50S ribosomal subunit.

Its subcellular location is the cytoplasm. The catalysed reaction is ATP + H2O = ADP + phosphate + H(+). In terms of biological role, DEAD-box RNA helicase involved in the assembly of the 50S ribosomal subunit at low temperature. Exhibits RNA-stimulated ATP hydrolysis and RNA unwinding activity. In Haemophilus influenzae (strain ATCC 51907 / DSM 11121 / KW20 / Rd), this protein is ATP-dependent RNA helicase SrmB.